Consider the following 268-residue polypeptide: Tryptophan synthase alpha chain (268 aa).

Residues Glu49 and Asp60 each act as proton acceptor in the active site.

This sequence belongs to the TrpA family. As to quaternary structure, tetramer of two alpha and two beta chains.

It catalyses the reaction (1S,2R)-1-C-(indol-3-yl)glycerol 3-phosphate + L-serine = D-glyceraldehyde 3-phosphate + L-tryptophan + H2O. Its pathway is amino-acid biosynthesis; L-tryptophan biosynthesis; L-tryptophan from chorismate: step 5/5. In terms of biological role, the alpha subunit is responsible for the aldol cleavage of indoleglycerol phosphate to indole and glyceraldehyde 3-phosphate. The sequence is that of Tryptophan synthase alpha chain from Shigella boydii serotype 4 (strain Sb227).